A 269-amino-acid polypeptide reads, in one-letter code: Interleukin-1 beta (269 aa).

Positions 1–116 (MAEVPELASE…TRNNDACVHD (116 aa)) are excised as a propeptide.

This sequence belongs to the IL-1 family. Monomer. In its precursor form, weakly interacts with full-length MEFV; the mature cytokine does not interact at all. Interacts with integrins ITGAV:ITGBV and ITGA5:ITGB1; integrin-binding is required for IL1B signaling. Interacts with cargo receptor TMED10; the interaction is direct and is required for the secretion of IL1B mature form. Interacts with HSP90AB1; the interaction facilitates cargo translocation into the ERGIC. Interacts with HSP90B1; the interaction facilitates cargo translocation into the ERGIC.

The protein resides in the cytoplasm. The protein localises to the cytosol. It is found in the secreted. Its subcellular location is the lysosome. It localises to the extracellular exosome. Functionally, potent pro-inflammatory cytokine. Initially discovered as the major endogenous pyrogen, induces prostaglandin synthesis, neutrophil influx and activation, T-cell activation and cytokine production, B-cell activation and antibody production, and fibroblast proliferation and collagen production. Promotes Th17 differentiation of T-cells. Synergizes with IL12/interleukin-12 to induce IFNG synthesis from T-helper 1 (Th1) cells. Plays a role in angiogenesis by inducing VEGF production synergistically with TNF and IL6. Involved in transduction of inflammation downstream of pyroptosis: its mature form is specifically released in the extracellular milieu by passing through the gasdermin-D (GSDMD) pore. This chain is Interleukin-1 beta (IL1B), found in Macaca mulatta (Rhesus macaque).